The following is a 372-amino-acid chain: Pluviatolide O-methyltransferase (372 aa).

Gly-214, Asp-237, Asp-257, Met-258, and Lys-271 together coordinate S-adenosyl-L-homocysteine. The Proton acceptor role is filled by His-275. Residues Asp-306 and Glu-338 contribute to the active site.

This sequence belongs to the class I-like SAM-binding methyltransferase superfamily. Cation-independent O-methyltransferase family. COMT subfamily. Homodimer. As to expression, mostly expressed in stems, and, to a lower extent, in leaves.

It carries out the reaction (-)-pluviatolide + S-adenosyl-L-methionine = (-)-bursehernin + S-adenosyl-L-homocysteine + H(+). Its pathway is aromatic compound metabolism; phenylpropanoid biosynthesis. Functionally, O-methyltransferase involved in the biosynthesis of etoposide, a chemotherapeutic compound of the topoisomerase inhibitor family. Catalyzes the methylation of (-)-pluviatolide to produce (-)-bursehernin. The polypeptide is Pluviatolide O-methyltransferase (Sinopodophyllum hexandrum (Himalayan may apple)).